Here is a 218-residue protein sequence, read N- to C-terminus: Protein-L-isoaspartate O-methyltransferase (218 aa).

Ser52 is an active-site residue.

This sequence belongs to the methyltransferase superfamily. L-isoaspartyl/D-aspartyl protein methyltransferase family.

The protein localises to the cytoplasm. The catalysed reaction is [protein]-L-isoaspartate + S-adenosyl-L-methionine = [protein]-L-isoaspartate alpha-methyl ester + S-adenosyl-L-homocysteine. In terms of biological role, catalyzes the methyl esterification of L-isoaspartyl residues in peptides and proteins that result from spontaneous decomposition of normal L-aspartyl and L-asparaginyl residues. It plays a role in the repair and/or degradation of damaged proteins. In Rhodopseudomonas palustris (strain ATCC BAA-98 / CGA009), this protein is Protein-L-isoaspartate O-methyltransferase.